We begin with the raw amino-acid sequence, 1166 residues long: DNA-directed RNA polymerase subunit beta (1166 aa).

The protein belongs to the RNA polymerase beta chain family. In terms of assembly, the RNAP catalytic core consists of 2 alpha, 1 beta, 1 beta' and 1 omega subunit. When a sigma factor is associated with the core the holoenzyme is formed, which can initiate transcription.

It carries out the reaction RNA(n) + a ribonucleoside 5'-triphosphate = RNA(n+1) + diphosphate. Its function is as follows. DNA-dependent RNA polymerase catalyzes the transcription of DNA into RNA using the four ribonucleoside triphosphates as substrates. The protein is DNA-directed RNA polymerase subunit beta of Nocardioides sp. (strain ATCC BAA-499 / JS614).